An 834-amino-acid chain; its full sequence is Copper-exporting P-type ATPase (834 aa).

Topologically, residues serine 2–arginine 186 are cytoplasmic. HMA domains are found at residues glutamine 3–serine 64 and aspartate 99–glutamate 162. Cu(+) is bound by residues cysteine 14, cysteine 17, cysteine 110, and cysteine 113. 2 short sequence motifs (CXXC motif) span residues cysteine 14–cysteine 17 and cysteine 110–cysteine 113. The chain crosses the membrane as a helical span at residues tryptophan 187 to aspartate 207. The Periplasmic; loop 1 segment spans residues asparagine 208–serine 217. The chain crosses the membrane as a helical span at residues leucine 218–tyrosine 238. Residues arginine 239 to aspartate 253 lie on the Cytoplasmic side of the membrane. A helical transmembrane segment spans residues threonine 254 to proline 274. Over glutamine 275 to histidine 283 the chain is Periplasmic; loop 2. A helical transmembrane segment spans residues leucine 284–alanine 304. Residues arginine 305–serine 437 are Cytoplasmic-facing. The chain crosses the membrane as a helical span at residues alanine 438–phenylalanine 458. Residues glycine 459–glutamine 463 are Periplasmic; loop 3-facing. A helical membrane pass occupies residues isoleucine 464–glycine 484. The Cytoplasmic segment spans residues leucine 485–leucine 778. Catalysis depends on aspartate 523, which acts as the 4-aspartylphosphate intermediate. Residues aspartate 720 and aspartate 724 each contribute to the Mg(2+) site. A helical membrane pass occupies residues leucine 779–phenylalanine 799. Threonine 800 is a topological domain (periplasmic; loop 4). A helical membrane pass occupies residues glycine 801–valine 821. The Cytoplasmic portion of the chain corresponds to serine 822 to glutamate 834.

The protein belongs to the cation transport ATPase (P-type) (TC 3.A.3) family. Type IB subfamily. In terms of assembly, copper-exporting P-type ATPase interacts with apo-periplasmic copper chaperone CusF; when CusF is precharged with copper it binds very little CopA. The periplasmic loops of CopA, especially the first half of loop 1, play a large role in binding to CusF.

The protein resides in the cell inner membrane. The protein localises to the cytoplasm. The enzyme catalyses Cu(+)(in) + ATP + H2O = Cu(+)(out) + ADP + phosphate + H(+). Its activity is regulated as follows. Export is inhibited by vanadate. Phosphorylation is inhibited by vanadate and sensitive to KOH and hydroxylamine; it is not inhibited by azide. Phosphorylation is Cu(+) not Cu(2+)-dependent. ATPase activity is inhibited by bathocuproindisulfonate (BCDS), which chelates Cu(+) but not Cu(2+), and stimulated 3-4-fold by Cu(+). ATPase activity is inhibited by Cu(2+) plus DTT or Ag(+). Its function is as follows. Exports Cu(+) from the cytoplasm to the periplasm. Binds 2 Cu(+) ions per monomer, which are transferred to periplasmic copper chaperone CusF upon ATP hydrolysis. In vitro an excess of CusF over CopA is required for efficient transfer. May also be involved in silver export. Functionally, mRNA is subject to programmed ribosomal frameshifting which produces a cytoplasmic copper chaperone CopA(Z) that corresponds to the first HMA domain. The soluble form is essential for cell survivial in the presence of CuSO(4); in growth competition experiments between wild-type and a version that prevents expression of CopA(Z) after 50 generations the non-CopA(Z) version is nearly extinct. The first HMA domain (residues 1-70) can be replaced by B.subtilis Cu chaperone CopZ. The polypeptide is Copper-exporting P-type ATPase (Escherichia coli (strain K12)).